The following is a 376-amino-acid chain: Succinyl-diaminopimelate desuccinylase (376 aa).

Residue His-66 coordinates Zn(2+). Asp-68 is a catalytic residue. Asp-99 contacts Zn(2+). Glu-133 (proton acceptor) is an active-site residue. Zn(2+) contacts are provided by Glu-134, Glu-162, and His-348.

Belongs to the peptidase M20A family. DapE subfamily. In terms of assembly, homodimer. The cofactor is Zn(2+). Co(2+) is required as a cofactor.

It catalyses the reaction N-succinyl-(2S,6S)-2,6-diaminopimelate + H2O = (2S,6S)-2,6-diaminopimelate + succinate. It functions in the pathway amino-acid biosynthesis; L-lysine biosynthesis via DAP pathway; LL-2,6-diaminopimelate from (S)-tetrahydrodipicolinate (succinylase route): step 3/3. Functionally, catalyzes the hydrolysis of N-succinyl-L,L-diaminopimelic acid (SDAP), forming succinate and LL-2,6-diaminopimelate (DAP), an intermediate involved in the bacterial biosynthesis of lysine and meso-diaminopimelic acid, an essential component of bacterial cell walls. The protein is Succinyl-diaminopimelate desuccinylase of Thioalkalivibrio sulfidiphilus (strain HL-EbGR7).